The sequence spans 844 residues: Probable inorganic carbon transporter subunit DabA 1 (844 aa).

Positions 359, 361, 543, and 558 each coordinate Zn(2+).

This sequence belongs to the inorganic carbon transporter (TC 9.A.2) DabA family. In terms of assembly, forms a complex with DabB. The cofactor is Zn(2+).

The protein resides in the cell inner membrane. Its function is as follows. Part of an energy-coupled inorganic carbon pump. This is Probable inorganic carbon transporter subunit DabA 1 from Bradyrhizobium sp. (strain BTAi1 / ATCC BAA-1182).